A 950-amino-acid polypeptide reads, in one-letter code: Translation initiation factor IF-2 (950 aa).

4 stretches are compositionally biased toward basic and acidic residues: residues 128-158 (KPKV…EAKA), 165-186 (AEVK…EKKK), 200-234 (KRAE…DNRR), and 291-312 (NRRD…DGNR). Residues 128–354 (KPKVAEPVKK…NNQSSSVPAT (227 aa)) form a disordered region. 2 stretches are compositionally biased toward polar residues: residues 322-336 (NRNQ…NWNQ) and 343-353 (YQNNQSSSVPA). The 172-residue stretch at 448–619 (ERPAVVTIMG…LLVAEVQELK (172 aa)) folds into the tr-type G domain. The interval 457–464 (GHVDHGKT) is G1. Position 457 to 464 (457 to 464 (GHVDHGKT)) interacts with GTP. The interval 482-486 (GITQH) is G2. The tract at residues 503–506 (DTPG) is G3. GTP contacts are provided by residues 503 to 507 (DTPGH) and 557 to 560 (NKID). Residues 557 to 560 (NKID) are G4. The interval 595–597 (SAK) is G5.

The protein belongs to the TRAFAC class translation factor GTPase superfamily. Classic translation factor GTPase family. IF-2 subfamily.

The protein resides in the cytoplasm. One of the essential components for the initiation of protein synthesis. Protects formylmethionyl-tRNA from spontaneous hydrolysis and promotes its binding to the 30S ribosomal subunits. Also involved in the hydrolysis of GTP during the formation of the 70S ribosomal complex. The chain is Translation initiation factor IF-2 from Lactococcus lactis subsp. cremoris (strain MG1363).